Here is a 110-residue protein sequence, read N- to C-terminus: UPF0122 protein SAR1212 (110 aa).

It belongs to the UPF0122 family.

Its function is as follows. Might take part in the signal recognition particle (SRP) pathway. This is inferred from the conservation of its genetic proximity to ftsY/ffh. May be a regulatory protein. In Staphylococcus aureus (strain MRSA252), this protein is UPF0122 protein SAR1212.